The following is a 152-amino-acid chain: Transcriptional repressor NrdR (152 aa).

The segment at 3–34 (CPYCNASDTKVIDSRLAAEGAQVRRRRSCNSC) is a zinc-finger region. Residues 49-139 (PRIIKSSGKI…VYRDFQDIDA (91 aa)) form the ATP-cone domain.

This sequence belongs to the NrdR family. The cofactor is Zn(2+).

Negatively regulates transcription of bacterial ribonucleotide reductase nrd genes and operons by binding to NrdR-boxes. This Psychrobacter arcticus (strain DSM 17307 / VKM B-2377 / 273-4) protein is Transcriptional repressor NrdR.